We begin with the raw amino-acid sequence, 149 residues long: D-aminoacyl-tRNA deacylase (149 aa).

A Gly-cisPro motif, important for rejection of L-amino acids motif is present at residues 137–138 (GP).

Belongs to the DTD family. As to quaternary structure, homodimer.

It localises to the cytoplasm. The catalysed reaction is glycyl-tRNA(Ala) + H2O = tRNA(Ala) + glycine + H(+). It catalyses the reaction a D-aminoacyl-tRNA + H2O = a tRNA + a D-alpha-amino acid + H(+). In terms of biological role, an aminoacyl-tRNA editing enzyme that deacylates mischarged D-aminoacyl-tRNAs. Also deacylates mischarged glycyl-tRNA(Ala), protecting cells against glycine mischarging by AlaRS. Acts via tRNA-based rather than protein-based catalysis; rejects L-amino acids rather than detecting D-amino acids in the active site. By recycling D-aminoacyl-tRNA to D-amino acids and free tRNA molecules, this enzyme counteracts the toxicity associated with the formation of D-aminoacyl-tRNA entities in vivo and helps enforce protein L-homochirality. The sequence is that of D-aminoacyl-tRNA deacylase from Clostridium botulinum (strain Alaska E43 / Type E3).